Consider the following 265-residue polypeptide: Thioredoxin-related transmembrane protein 2 homolog (265 aa).

The N-terminal stretch at 1–32 (MLIPRLDEVRRALTAFHFFNTLLALAFPVIRS) is a signal peptide. At 33-96 (TSLCDYVFAV…KIAGMFLFIR (64 aa)) the chain is on the extracellular side. Residues 97-117 (ADILPGIIYILACLIVTVLFP) form a helical membrane-spanning segment. At 118–265 (EPVYNGPEQV…KKGAKAKKED (148 aa)) the chain is on the cytoplasmic side. Residues 126-230 (QVTYFQGEQL…RPLVNDSRRA (105 aa)) form the Thioredoxin domain. A Di-lysine motif motif is present at residues 262–265 (KKED).

It localises to the membrane. In Caenorhabditis elegans, this protein is Thioredoxin-related transmembrane protein 2 homolog.